The primary structure comprises 214 residues: NAD(P)H-quinone oxidoreductase subunit 5, chloroplastic (214 aa).

The next 2 helical transmembrane spans lie at 84–104 (LFPLLILLLFTFFIGFIGIPF) and 152–172 (SLAILGLFIAYIFYGSAYSFF).

It belongs to the complex I subunit 5 family. As to quaternary structure, NDH is composed of at least 16 different subunits, 5 of which are encoded in the nucleus.

It localises to the plastid. Its subcellular location is the chloroplast thylakoid membrane. The enzyme catalyses a plastoquinone + NADH + (n+1) H(+)(in) = a plastoquinol + NAD(+) + n H(+)(out). It carries out the reaction a plastoquinone + NADPH + (n+1) H(+)(in) = a plastoquinol + NADP(+) + n H(+)(out). In terms of biological role, NDH shuttles electrons from NAD(P)H:plastoquinone, via FMN and iron-sulfur (Fe-S) centers, to quinones in the photosynthetic chain and possibly in a chloroplast respiratory chain. The immediate electron acceptor for the enzyme in this species is believed to be plastoquinone. Couples the redox reaction to proton translocation, and thus conserves the redox energy in a proton gradient. In Brachypodium pinnatum (Tor grass), this protein is NAD(P)H-quinone oxidoreductase subunit 5, chloroplastic (ndhF).